We begin with the raw amino-acid sequence, 201 residues long: MQRDMSINHLLPPLSGPGQVEQLTGFTNDIVYNDFYAHAVSYNPYPSEKIDFPKKNTAHKNSTTSTVASSGNTTMEKPCVGSEEWYKAKRLSHKEVERRRREAISEGIKELANIVPGCEKNKGSILQRTAQYIRSLKEMEEMCREKSNLEKLVADHTIQELARENARLKSECERAWRSVELWKQAARSFDSELDVEENSES.

The segment at 53 to 74 (PKKNTAHKNSTTSTVASSGNTT) is disordered. Residues 59–74 (HKNSTTSTVASSGNTT) show a composition bias toward polar residues. A bHLH domain is found at 88-136 (AKRLSHKEVERRRREAISEGIKELANIVPGCEKNKGSILQRTAQYIRSL).

Its subcellular location is the nucleus. This is an uncharacterized protein from Schizosaccharomyces pombe (strain 972 / ATCC 24843) (Fission yeast).